Here is an 848-residue protein sequence, read N- to C-terminus: Paramyosin (848 aa).

The interval 1 to 9 is nonhelical region; the sequence is AFGSMSVAD. Residues 10–833 are a coiled coil; the sequence is LGSLTRLEDK…HLIRAKHRSS (824 aa). The tract at residues 834–848 is nonhelical region; it reads VVTGKNASASKIYVL.

It belongs to the paramyosin family. Homodimer.

The protein localises to the cytoplasm. It localises to the myofibril. Functionally, paramyosin is a major structural component of many thick filaments isolated from invertebrate muscles. This Dirofilaria immitis (Canine heartworm) protein is Paramyosin.